Consider the following 477-residue polypeptide: Ribulose bisphosphate carboxylase large chain (477 aa).

The propeptide occupies 1–2 (MS). P3 bears the N-acetylproline mark. At K14 the chain carries N6,N6,N6-trimethyllysine. Residues N123 and T173 each coordinate substrate. The Proton acceptor role is filled by K175. Position 177 (K177) interacts with substrate. The Mg(2+) site is built by K201, D203, and E204. K201 is subject to N6-carboxylysine. The active-site Proton acceptor is the H294. R295, H327, and S379 together coordinate substrate.

It belongs to the RuBisCO large chain family. Type I subfamily. As to quaternary structure, heterohexadecamer of 8 large chains and 8 small chains; disulfide-linked. The disulfide link is formed within the large subunit homodimers. The cofactor is Mg(2+). The disulfide bond which can form in the large chain dimeric partners within the hexadecamer appears to be associated with oxidative stress and protein turnover.

It is found in the plastid. The protein localises to the chloroplast. The catalysed reaction is 2 (2R)-3-phosphoglycerate + 2 H(+) = D-ribulose 1,5-bisphosphate + CO2 + H2O. The enzyme catalyses D-ribulose 1,5-bisphosphate + O2 = 2-phosphoglycolate + (2R)-3-phosphoglycerate + 2 H(+). Functionally, ruBisCO catalyzes two reactions: the carboxylation of D-ribulose 1,5-bisphosphate, the primary event in carbon dioxide fixation, as well as the oxidative fragmentation of the pentose substrate in the photorespiration process. Both reactions occur simultaneously and in competition at the same active site. This chain is Ribulose bisphosphate carboxylase large chain, found in Dioscorea elephantipes (Elephant's foot yam).